The sequence spans 861 residues: Valine--tRNA ligase (861 aa).

The 'HIGH' region signature appears at 42–52 (PNITGRIHMGH). Residues 521–525 (KMSKS) carry the 'KMSKS' region motif. ATP is bound at residue Lys-524. Residues 792 to 861 (VAGLNLQSEI…ILNQILGDLM (70 aa)) are a coiled coil.

This sequence belongs to the class-I aminoacyl-tRNA synthetase family. ValS type 1 subfamily. Monomer.

It is found in the cytoplasm. The catalysed reaction is tRNA(Val) + L-valine + ATP = L-valyl-tRNA(Val) + AMP + diphosphate. Functionally, catalyzes the attachment of valine to tRNA(Val). As ValRS can inadvertently accommodate and process structurally similar amino acids such as threonine, to avoid such errors, it has a 'posttransfer' editing activity that hydrolyzes mischarged Thr-tRNA(Val) in a tRNA-dependent manner. The sequence is that of Valine--tRNA ligase from Pseudothermotoga lettingae (strain ATCC BAA-301 / DSM 14385 / NBRC 107922 / TMO) (Thermotoga lettingae).